A 74-amino-acid polypeptide reads, in one-letter code: Protein SMIM7 homolog (74 aa).

A helical membrane pass occupies residues 53 to 73 (FRAFIGLWNIFIMFLMLVFFG).

It belongs to the SMIM7 family.

The protein localises to the membrane. This chain is Protein SMIM7 homolog, found in Ixodes scapularis (Black-legged tick).